A 630-amino-acid polypeptide reads, in one-letter code: DNA mismatch repair protein MutL (630 aa).

Disordered stretches follow at residues 361 to 386 and 407 to 431; these read VLSSDIGGGEDATAPLAPLTGDAPAE and FERKQEEEVGEERCSPRLPTDGQAE. The span at 407–421 shows a compositional bias: basic and acidic residues; it reads FERKQEEEVGEERCS.

It belongs to the DNA mismatch repair MutL/HexB family.

This protein is involved in the repair of mismatches in DNA. It is required for dam-dependent methyl-directed DNA mismatch repair. May act as a 'molecular matchmaker', a protein that promotes the formation of a stable complex between two or more DNA-binding proteins in an ATP-dependent manner without itself being part of a final effector complex. In Geobacillus kaustophilus (strain HTA426), this protein is DNA mismatch repair protein MutL.